A 289-amino-acid chain; its full sequence is Syntaxin-2 (289 aa).

Residues 1–265 (MRDRLPDLTA…KYQSKARRKK (265 aa)) are Cytoplasmic-facing. Positions 68 to 101 (EGKIKEELEDLDKEIKKTANRIRGKLKSIEQSCD) form a coiled coil. One can recognise a t-SNARE coiled-coil homology domain in the interval 192–254 (LNEIESRHKD…EHAKEETKKA (63 aa)). Residues 266–289 (WIIAAVAVAVIAVLALIIGLSVGK) form a helical; Anchor for type IV membrane protein membrane-spanning segment.

The protein belongs to the syntaxin family. Interacts with SYT6 and SYT8; the interaction is Ca(2+)-dependent.

It localises to the membrane. In terms of biological role, essential for epithelial morphogenesis. May mediate Ca(2+)-regulation of exocytosis acrosomal reaction in sperm. The polypeptide is Syntaxin-2 (Stx2) (Mus musculus (Mouse)).